Consider the following 196-residue polypeptide: Xanthine phosphoribosyltransferase (196 aa).

Xanthine-binding residues include Leu-26 and Asn-33. 134–138 lines the 5-phospho-alpha-D-ribose 1-diphosphate pocket; the sequence is ASGEA. Position 162 (Lys-162) interacts with xanthine.

The protein belongs to the purine/pyrimidine phosphoribosyltransferase family. Xpt subfamily. In terms of assembly, homodimer.

Its subcellular location is the cytoplasm. The enzyme catalyses XMP + diphosphate = xanthine + 5-phospho-alpha-D-ribose 1-diphosphate. Its pathway is purine metabolism; XMP biosynthesis via salvage pathway; XMP from xanthine: step 1/1. Its function is as follows. Converts the preformed base xanthine, a product of nucleic acid breakdown, to xanthosine 5'-monophosphate (XMP), so it can be reused for RNA or DNA synthesis. The polypeptide is Xanthine phosphoribosyltransferase (Moorella thermoacetica (strain ATCC 39073 / JCM 9320)).